A 348-amino-acid chain; its full sequence is Dihydroorotase (348 aa).

The Zn(2+) site is built by His-14 and His-16. Residues 16 to 18 (HLR) and Asn-42 each bind substrate. The Zn(2+) site is built by Lys-100, His-137, and His-175. At Lys-100 the chain carries N6-carboxylysine. His-137 lines the substrate pocket. Leu-220 provides a ligand contact to substrate. Asp-248 contacts Zn(2+). The active site involves Asp-248. Substrate contacts are provided by His-252 and Ala-264.

It belongs to the metallo-dependent hydrolases superfamily. DHOase family. Class II DHOase subfamily. In terms of assembly, homodimer. Zn(2+) is required as a cofactor.

It carries out the reaction (S)-dihydroorotate + H2O = N-carbamoyl-L-aspartate + H(+). Its pathway is pyrimidine metabolism; UMP biosynthesis via de novo pathway; (S)-dihydroorotate from bicarbonate: step 3/3. Functionally, catalyzes the reversible cyclization of carbamoyl aspartate to dihydroorotate. The protein is Dihydroorotase of Pseudomonas putida (strain ATCC 47054 / DSM 6125 / CFBP 8728 / NCIMB 11950 / KT2440).